The following is a 639-amino-acid chain: Chaperone protein DnaK (639 aa).

Residue Thr198 is modified to Phosphothreonine; by autocatalysis. Residues 597-639 (AYSAGQSAEGAPHAAGAEASAQSRTDDGVVDADFEEVDEKKGH) form a disordered region. Positions 603 to 617 (SAEGAPHAAGAEASA) are enriched in low complexity. Residues 624–633 (GVVDADFEEV) show a composition bias toward acidic residues.

It belongs to the heat shock protein 70 family.

Its function is as follows. Acts as a chaperone. In Rhodospirillum rubrum (strain ATCC 11170 / ATH 1.1.1 / DSM 467 / LMG 4362 / NCIMB 8255 / S1), this protein is Chaperone protein DnaK.